We begin with the raw amino-acid sequence, 493 residues long: Alpha-amylase-related protein (493 aa).

Positions 1–19 (MFKFALALTLCLAGSLSLA) are cleaved as a signal peptide. Gln20 is modified (pyrrolidone carboxylic acid). Residues Cys47 and Cys103 are joined by a disulfide bond. Ca(2+) is bound by residues Asn117, Gln168, and Asp177. Cysteines 156 and 170 form a disulfide. Arg205 serves as a coordination point for chloride. The active-site Nucleophile is Asp207. His211 lines the Ca(2+) pocket. Glu244 (proton donor) is an active-site residue. The chloride site is built by Asn307 and Arg342. 3 disulfide bridges follow: Cys375-Cys381, Cys417-Cys440, and Cys447-Cys459.

Belongs to the glycosyl hydrolase 13 family. In terms of assembly, monomer. Requires Ca(2+) as cofactor. It depends on chloride as a cofactor.

It is found in the secreted. The catalysed reaction is Endohydrolysis of (1-&gt;4)-alpha-D-glucosidic linkages in polysaccharides containing three or more (1-&gt;4)-alpha-linked D-glucose units.. The chain is Alpha-amylase-related protein (Amyrel) from Drosophila elegans (Fruit fly).